Consider the following 258-residue polypeptide: Short-chain dehydrogenase chyC (258 aa).

Residues Arg37, Asp55, Asn81, Tyr154, Lys158, Val185, and Thr187 each contribute to the NADP(+) site. Tyr154 serves as the catalytic Proton donor. The active-site Lowers pKa of active site Tyr is Lys158.

The protein belongs to the short-chain dehydrogenases/reductases (SDR) family.

In terms of biological role, short-chain dehydrogenase; part of the gene cluster that mediates the biosynthesis of the yellow pigment chrysogine. the NRPS chyA mediates the condensation of anthranilic acid and alanine into the intermediate 2-(2-aminopropanamido)benzoic acid. The remainder of the pathway is highly branched yielding at least 13 chrysogine-related compounds. The malonyl transferase chyE converts 2-(2-aminopropanamido)benzoic acid and 2-(2-aminopropanamido)benzamidine into 2-(2-(2-carboxyacetamido)propanamido)benzoic acid and 3-((1-((2-carbamoylphenyl)amino)-1-oxopropan-2-yl)amino)-3-oxopropanoic acid, respectively. ChyD is an amidase, being responsible for the amidation of the carboxylic acid moiety of 2-(2-aminopropanamido)benzoic acid, 2-(2-(2-carboxyacetamido)propanamido)benzoic acid and 2-(2-((4-amino-1-carboxy-4-oxobutyl)amino)propanamido)benzoic acid. ChyC is involved in the same reactions as ChyD, but plays a more minor role in the amidation reactions compared to chyD. The oxidoreductases chyH and chyM are involved in oxidation reactions that form N-pyruvoylanthranilamide from 2-(2-aminopropanamido)benzamidine and (1-((2-carbamoylphenyl)amino)-1-oxopropan-2-yl)glutamine, respectively. N-pyruvoylanthranilamide is further converted via two further branches in the pathway, yielding chrysogine and additional chrysogine-related coumpounds. Chrysogine is likely formed by a spontaneous ring closure from N-pyruvoylanthranilamide. The polypeptide is Short-chain dehydrogenase chyC (Penicillium rubens (strain ATCC 28089 / DSM 1075 / NRRL 1951 / Wisconsin 54-1255) (Penicillium chrysogenum)).